The chain runs to 338 residues: Heat-inducible transcription repressor HrcA (338 aa).

This sequence belongs to the HrcA family.

Functionally, negative regulator of class I heat shock genes (grpE-dnaK-dnaJ and groELS operons). Prevents heat-shock induction of these operons. The protein is Heat-inducible transcription repressor HrcA of Streptomyces albus G.